A 216-amino-acid polypeptide reads, in one-letter code: CRIB domain-containing protein RIC7 (216 aa).

In terms of domain architecture, CRIB spans 36 to 49 (IGNPTDVKHVAHIG). The segment at 52–216 (GPSDNATAPS…PQFEDDRNGF (165 aa)) is disordered. The segment covering 108-121 (SSSEKGSPTKERSD) has biased composition (basic and acidic residues).

Interacts with ARAC4/ROP2 and ARAC11/ROP1. In terms of tissue distribution, expressed in roots, leaves, guard cells, stems, flowers, siliques and pollen.

It is found in the nucleus. Its subcellular location is the cytoplasm. It localises to the cell membrane. In terms of biological role, functions as a downstream effector of Rho-related GTP binding proteins of the 'Rho of Plants' (ROPs) family. Participates in the propagation of ROP GTPase signals in specific cellular responses. Functions as a downstream effector of active ARAC4/ROP2 GTPase which is involved in the prevention of excessive stomatal opening upon light stimulation. Is involved in pollen tube growth regulation through its interaction with ARAC11/ROP1. This chain is CRIB domain-containing protein RIC7 (RIC7), found in Arabidopsis thaliana (Mouse-ear cress).